Here is a 165-residue protein sequence, read N- to C-terminus: Cathelicidin-7 (165 aa).

An N-terminal signal peptide occupies residues 1-29; it reads METQRASFSLGRSSLWLLLLGLVVPSASA. Positions 30–130 are excised as a propeptide; that stretch reads QDLSYREAVL…FDITCNNIQS (101 aa). 2 cysteine pairs are disulfide-bonded: cysteine 86/cysteine 97 and cysteine 108/cysteine 125. Arginine 164 bears the Arginine amide mark.

This sequence belongs to the cathelicidin family. As to expression, expressed in bone marrow myeloid cells, spleen and testis.

It localises to the secreted. Its function is as follows. Exerts a potent antimicrobial activity. The sequence is that of Cathelicidin-7 (CATHL7) from Bos taurus (Bovine).